The sequence spans 120 residues: Large ribosomal subunit protein uL18 (120 aa).

The protein belongs to the universal ribosomal protein uL18 family. In terms of assembly, part of the 50S ribosomal subunit; part of the 5S rRNA/L5/L18 subcomplex. In B.stearothermophilus only 2 proteins, L5 and L18 have been shown to be part of this subcomplex, unlike the case in E.coli and T.thermophilus where L25 (TL5) is also found. In terms of processing, the protein, when overexpressed in E.coli, contains a phosphoserine, which is required for the protein to bind to 5S rRNA. It has been suggested, based solely on amino acid conservation, that this occurs on Ser-57.

Its function is as follows. This is one of the proteins that bind and probably mediate the attachment of the 5S RNA into the large ribosomal subunit, where it forms part of the central protuberance. The sequence is that of Large ribosomal subunit protein uL18 (rplR) from Geobacillus stearothermophilus (Bacillus stearothermophilus).